The following is a 175-amino-acid chain: Orotate phosphoribosyltransferase (175 aa).

Residues Arg-89, Lys-90, Lys-93, and Glu-115 to Ser-123 each bind 5-phospho-alpha-D-ribose 1-diphosphate. Orotate is bound by residues Thr-119 and Arg-147.

The protein belongs to the purine/pyrimidine phosphoribosyltransferase family. PyrE subfamily. In terms of assembly, homodimer. Mg(2+) is required as a cofactor.

It carries out the reaction orotidine 5'-phosphate + diphosphate = orotate + 5-phospho-alpha-D-ribose 1-diphosphate. The protein operates within pyrimidine metabolism; UMP biosynthesis via de novo pathway; UMP from orotate: step 1/2. Catalyzes the transfer of a ribosyl phosphate group from 5-phosphoribose 1-diphosphate to orotate, leading to the formation of orotidine monophosphate (OMP). This is Orotate phosphoribosyltransferase from Halobacterium salinarum (strain ATCC 700922 / JCM 11081 / NRC-1) (Halobacterium halobium).